We begin with the raw amino-acid sequence, 141 residues long: Auxin-responsive protein SAUR62 (141 aa).

This sequence belongs to the ARG7 family. In terms of tissue distribution, expressed in stamen filaments and petals.

The protein localises to the cell membrane. Functionally, may promote auxin-stimulated organ elongation, such as hypocotyls, stamen filaments and petals. The chain is Auxin-responsive protein SAUR62 from Arabidopsis thaliana (Mouse-ear cress).